Here is a 174-residue protein sequence, read N- to C-terminus: MKLSNKSQALYDMIAPAVEACGVDLWGIEFLPQGKRSLLRIYIDRPVDENAEPVINEDGEVEQGRGIGVEDCVRVTQQVGAMLDVHDPISGEYALEVSSPGWDRPFFQLEQLQGYIGQQVALRLIAAVENRRKFQAKLLAVDLENEEIQVEVEGKHVLDIDSNNIDKANLIYQD.

The protein belongs to the RimP family.

Its subcellular location is the cytoplasm. Its function is as follows. Required for maturation of 30S ribosomal subunits. The chain is Ribosome maturation factor RimP from Acinetobacter baumannii (strain AB307-0294).